The chain runs to 1310 residues: MDSRDWTQLGCVAYPSPIHPDYHAGPASTIAFDNQDELLWIGTQKGFAGSFIGRELKRFTAFRIHPETDGPLRQFLFVDKGVIFLGSRSVYMAARSGVPIWSIRHESMQDLRAMSFTSKGTSEILVAGWQNKMLVIDVNKGEVVKELPTQDQYSFLKMSRYICAATNKGTVNILDPITFTIKKQWQAHGAFINDLDTSNDFIVTCGGSHRQTHNTPAILDPYVKVFDLKNMSAMNPVPFAPLAAHVRMHPRMLTTAIVVNQAGQIHVTDLLNPSNSQVCYTQPQGVVLHFDVSRTGEGKALADNKHNTYVWGSPNKIQFTEIGIPPRLPDPPQPSLLPPDPDMLEELPLSRIGLPYYREQLFSALPPDIISDVGAPPQQIDPNILSTLTKTDWGYIGPNKTGLQRNQYMDTRSTMKTSNTIRAPKFLSEKARESQTGSEDNTLATNETAMMTPNNDHWSLRPEAPPEYRICEIKYSKFGVDDFDFGFFNNTPYPGLENNITNSYANSLLQVMHYTPLLRNMALQHAATACLADPCLLCELGYVFDMLQKGEGPSCHATNMLRALNHTSNASVSGVLEDIAKDKNPSTLVKNLTMFLFDKISQDYKGTPPISTELERTLFKLNQPPNPLDLVKRLLETDARYQIKCMHCQHVSPRTATTFVNKLCYPAAKPNIRGMKAQRITFSQVLKAGLENEAVNKGYCTKCQRYQNLDQRKIIFNIPAVLALCTEITTAEHRKLWSTPGWLPEEIGIIVDQGHVYCYEGDDLKLHLNRGIHNITVYSLVGTVVNVETKSPQKSHLVATVNVGRAEPESKDQDRWHLFNDFSVRGISKVEALTFNAAWKMPVVVMFQVKAANHRFNMDWKTRLDTSVLFRDNNPHALKTYELLDRETEIPGPDTVIAIDTEFIRLKEREIHIDEDGKSKTIRPISHAIARASVVRGQGSREGVAFIDDYIHIKETIVDYLTEWSGITPTDLDPINSQRNLVSPKTAYKKLWVLVNLGCKFLGHGLSQDFRVINIQVPRNQVIDTSIIFMKPPSQRKISLAFLAWYLLKEDIQQNTHDSIEDAQTALKLYRKYEEFMANGSFHDVLEALYKKGKTLNFKPPRISTGAAKDAGFGAVHRVGTPPVPAPGTTEGSFEISNSSTATTGGSALSATGGMGSASASSSMPSTPVRKPIGLGGPFTVAGVVKPSPATSLDNFGAGAVGTGITTAAATMGGGYGGYGTDGAYWGGPNDMAPTSMIGGSAFIPAKFPPGPPETRGFIPYRPQVLLAEREAAAAAAAAAAAAAANNDVGGRGGVACGNGGAGGEQGKQE.

4 WD repeats span residues 22–61 (YHAG…RFTA), 67–105 (ETDG…SIRH), 106–144 (ESMQ…GEVV), and 145–184 (KELP…IKKQ). The interval 318 to 463 (QFTEIGIPPR…NNDHWSLRPE (146 aa)) is linker. One can recognise a USP domain in the interval 463-850 (EAPPEYRICE…MPVVVMFQVK (388 aa)). His525, Cys530, Cys535, Cys538, Cys645, Cys648, Cys700, and Cys703 together coordinate Zn(2+). The Exonuclease domain occupies 897–1070 (IAIDTEFIRL…EDAQTALKLY (174 aa)). Residues Asp900, Glu902, Asp1009, and Asp1062 each contribute to the a divalent metal cation site. The segment at 1121–1169 (TPPVPAPGTTEGSFEISNSSTATTGGSALSATGGMGSASASSSMPSTPV) is disordered. Over residues 1139–1168 (SSTATTGGSALSATGGMGSASASSSMPSTP) the composition is skewed to low complexity.

This sequence belongs to the peptidase C19 family. PAN2 subfamily. As to quaternary structure, forms a heterotrimer with an asymmetric homodimer of the regulatory subunit par-2/pan3 to form the poly(A)-nuclease (PAN) deadenylation complex. Requires a divalent metal cation as cofactor.

It is found in the cytoplasm. The enzyme catalyses Exonucleolytic cleavage of poly(A) to 5'-AMP.. Positively regulated by the regulatory subunit par-2/pan3. Its function is as follows. Catalytic subunit of the poly(A)-nuclease (PAN) deadenylation complex, one of two cytoplasmic mRNA deadenylases involved in mRNA turnover. PAN specifically shortens poly(A) tails of RNA and the activity is stimulated by poly(A)-binding protein pabp-1. PAN deadenylation is followed by rapid degradation of the shortened mRNA tails by the CCR4-NOT complex. Deadenylated mRNAs are then degraded by two alternative mechanisms, namely exosome-mediated 3'-5' exonucleolytic degradation, or deadenylation-dependent mRNA decaping and subsequent 5'-3' exonucleolytic degradation by rgb-30/xrn1. May also be involved in post-transcriptional maturation of mRNA poly(A) tails. This Neurospora crassa (strain ATCC 24698 / 74-OR23-1A / CBS 708.71 / DSM 1257 / FGSC 987) protein is PAN2-PAN3 deadenylation complex catalytic subunit pan2 (par-1).